An 895-amino-acid chain; its full sequence is Iron-regulated surface determinant protein H (895 aa).

The N-terminal stretch at 1-40 (MNKHHPKLRSFYSIRKSTLGVASVIVSTLFLITSQHQAQA) is a signal peptide. The tract at residues 42-85 (ENTNTSDKISENQNNNATTTQPPKDTNQTQPATQPANTAKNYPA) is disordered. Positions 53–62 (NQNNNATTTQ) are enriched in low complexity. Residues 63–81 (PPKDTNQTQPATQPANTAK) are compositionally biased toward polar residues. The region spanning 105–232 (DIGPREQVNF…IYNDPSLVKS (128 aa)) is the NEAT 1 domain. A disordered region spans residues 241–324 (NDQSSSVASN…NQSDVNQQYP (84 aa)). Positions 243–276 (QSSSVASNQTNTNTSNQNISTINNANNQPQATTN) are enriched in low complexity. Over residues 277–323 (MSQPAQPKSSTNADQASSQPAHETNSNGNTNDKTNESSNQSDVNQQY) the composition is skewed to polar residues. NEAT domains lie at 345-471 (TADN…DYVD) and 543-660 (QLTD…TKDD). 3 disordered regions span residues 657–720 (TKDD…DNNI), 751–782 (QIAKDTDRNVDKDADNSVGMSSNVDTDKDSNK), and 841–868 (KTKEKAGTPSKENKLSQSKMLPKTGETT). Composition is skewed to polar residues over residues 663 to 677 (SQNNTSEPLNVQTGQ) and 687 to 697 (AENSSTATNPK). 3 stretches are compositionally biased toward basic and acidic residues: residues 698 to 720 (DASDKADVIEPESDVVKDADNNI), 751 to 765 (QIAKDTDRNVDKDAD), and 841 to 854 (KTKEKAGTPSKENK). Residues 855–868 (LSQSKMLPKTGETT) are compositionally biased toward polar residues. Residues 861–865 (LPKTG) carry the LPXTG sorting signal motif. A Pentaglycyl murein peptidoglycan amidated threonine modification is found at T864. Positions 865–895 (GETTSSQSWWGLYALLGMLALFIPKFRKESK) are cleaved as a propeptide — removed by sortase.

The protein belongs to the IsdH family.

Its subcellular location is the secreted. It is found in the cell wall. Its function is as follows. Binds human plasma haptoglobin-hemoglobin complexes, haptoglobin and hemoglobin. Binds haptoglobin-hemoglobin complexes with significantly higher affinity than haptoglobin alone. This chain is Iron-regulated surface determinant protein H (isdH), found in Staphylococcus aureus (strain NCTC 8325 / PS 47).